The sequence spans 1019 residues: Collagen alpha-1(VI) chain (1019 aa).

Positions 1-19 are cleaved as a signal peptide; it reads MGLHDSFLALLLLLGGAWA. In terms of domain architecture, VWFA 1 spans 37 to 233; that stretch reads DLFFVLDTSE…LDVEETINNI (197 aa). N-linked (GlcNAc...) asparagine glycosylation occurs at N212. Positions 248-588 are disordered; the sequence is FECHPPRGPP…GPPGPVGPPG (341 aa). Residues 253–262 show a composition bias toward pro residues; it reads PRGPPGPPGD. Composition is skewed to basic and acidic residues over residues 299–332 and 370–380; these read KGDKGSRGEKGSRGAKGAKGEKGKRGIDGIDGMK and GKGEPGEDGKP. Over residues 427–436 the composition is skewed to low complexity; that stretch reads ERGPPGSPGD. Residues 476–478 carry the Cell attachment site motif; sequence RGD. N514 carries N-linked (GlcNAc...) asparagine glycosylation. A Cell attachment site motif is present at residues 529-531; sequence RGD. Residue N535 is glycosylated (N-linked (GlcNAc...) asparagine). A compositionally biased stretch (pro residues) spans 577–588; the sequence is RPGPPGPVGPPG. VWFA domains are found at residues 613-800 and 824-1012; these read DLLF…LQNI and DIML…YQTV. N799 and N887 each carry an N-linked (GlcNAc...) asparagine glycan.

It belongs to the type VI collagen family. As to quaternary structure, trimers composed of three different chains: alpha 1(VI), alpha 2(VI), and alpha 3(VI). Post-translationally, prolines at the third position of the tripeptide repeating unit (G-X-Y) are hydroxylated in some or all of the chains.

It localises to the secreted. The protein localises to the extracellular space. It is found in the extracellular matrix. Its function is as follows. Collagen VI acts as a cell-binding protein. This Gallus gallus (Chicken) protein is Collagen alpha-1(VI) chain (COL6A1).